A 71-amino-acid polypeptide reads, in one-letter code: DNA-directed RNA polymerase subunit omega (71 aa).

It belongs to the RNA polymerase subunit omega family. In terms of assembly, the RNAP catalytic core consists of 2 alpha, 1 beta, 1 beta' and 1 omega subunit. When a sigma factor is associated with the core the holoenzyme is formed, which can initiate transcription.

The catalysed reaction is RNA(n) + a ribonucleoside 5'-triphosphate = RNA(n+1) + diphosphate. In terms of biological role, promotes RNA polymerase assembly. Latches the N- and C-terminal regions of the beta' subunit thereby facilitating its interaction with the beta and alpha subunits. This chain is DNA-directed RNA polymerase subunit omega, found in Campylobacter concisus (strain 13826).